Consider the following 162-residue polypeptide: Nucleotide-binding protein CMM_2802 (162 aa).

It belongs to the YajQ family.

Functionally, nucleotide-binding protein. In Clavibacter michiganensis subsp. michiganensis (strain NCPPB 382), this protein is Nucleotide-binding protein CMM_2802.